A 211-amino-acid chain; its full sequence is Ion-translocating oxidoreductase complex subunit G (211 aa).

The helical transmembrane segment at 9–29 (GLTLAIFACATTGLVALTQYL) threads the bilayer. FMN phosphoryl threonine is present on Thr175.

It belongs to the RnfG family. The complex is composed of six subunits: RnfA, RnfB, RnfC, RnfD, RnfE and RnfG. It depends on FMN as a cofactor.

The protein resides in the cell inner membrane. In terms of biological role, part of a membrane-bound complex that couples electron transfer with translocation of ions across the membrane. This is Ion-translocating oxidoreductase complex subunit G from Vibrio parahaemolyticus serotype O3:K6 (strain RIMD 2210633).